The following is a 412-amino-acid chain: MSKKNIKKVVLAYSGGLDTSAIIPWLKENYDCEVIAFAADVGQGDEELEGLREKAIKTGASECYIVDLKDEFVSDYIYPTITTGAVYEGQYLLGTSMARPIIAKAQVEIARKVGADALCHGCTGKGNDQVRFEGTFAALAPELTVIAPWREWDMVSREDLLAYLAERDIKTTASATKIYSRDANAWHISHEGGELEDPWCEPTKEVWTMTVSPEDAPNTPERVEVSFEHGRMVKVNGEALSPYQCLVKLNELAGAHGVGRIDIVENRLVGMKSRGCYETPGGTVMLAAYKALESLVLDKAALKYREQIGLEFSHVMYDGRWFTPLNDALLAGAASFADKVTGDIVVKLYKGQATVTQRRSPNSLYSEDFATFGADDVYDQSHAEGFIRLYSLSSRISALNKEGIPFKNTGIE.

ATP is bound by residues 12–20 (AYSGGLDTS) and A39. Residues Y91 and S96 each contribute to the L-citrulline site. G121 contacts ATP. L-aspartate is bound by residues T123, N127, and D128. N127 provides a ligand contact to L-citrulline. Residues R131, S180, S189, E265, and Y277 each contribute to the L-citrulline site.

This sequence belongs to the argininosuccinate synthase family. Type 1 subfamily. Homotetramer.

The protein resides in the cytoplasm. It catalyses the reaction L-citrulline + L-aspartate + ATP = 2-(N(omega)-L-arginino)succinate + AMP + diphosphate + H(+). It functions in the pathway amino-acid biosynthesis; L-arginine biosynthesis; L-arginine from L-ornithine and carbamoyl phosphate: step 2/3. This is Argininosuccinate synthase from Pseudoalteromonas atlantica (strain T6c / ATCC BAA-1087).